We begin with the raw amino-acid sequence, 854 residues long: Valine--tRNA ligase (854 aa).

A 'HIGH' region motif is present at residues 46–56 (PTVSGDLHIGH). Positions 551 to 555 (KMSKS) match the 'KMSKS' region motif. Lys-554 is an ATP binding site.

It belongs to the class-I aminoacyl-tRNA synthetase family. ValS type 2 subfamily. Monomer.

The protein localises to the cytoplasm. It carries out the reaction tRNA(Val) + L-valine + ATP = L-valyl-tRNA(Val) + AMP + diphosphate. In terms of biological role, catalyzes the attachment of valine to tRNA(Val). As ValRS can inadvertently accommodate and process structurally similar amino acids such as threonine, to avoid such errors, it has a 'posttransfer' editing activity that hydrolyzes mischarged Thr-tRNA(Val) in a tRNA-dependent manner. This is Valine--tRNA ligase from Orientia tsutsugamushi (strain Boryong) (Rickettsia tsutsugamushi).